We begin with the raw amino-acid sequence, 485 residues long: Probable cobyric acid synthase (485 aa).

The GATase cobBQ-type domain occupies 250 to 435; sequence EVEIAVIRLP…LHGLFDNENI (186 aa). Cys328 serves as the catalytic Nucleophile. Residue His427 is part of the active site.

The protein belongs to the CobB/CobQ family. CobQ subfamily.

It functions in the pathway cofactor biosynthesis; adenosylcobalamin biosynthesis. Functionally, catalyzes amidations at positions B, D, E, and G on adenosylcobyrinic A,C-diamide. NH(2) groups are provided by glutamine, and one molecule of ATP is hydrogenolyzed for each amidation. This chain is Probable cobyric acid synthase, found in Methanosarcina acetivorans (strain ATCC 35395 / DSM 2834 / JCM 12185 / C2A).